Reading from the N-terminus, the 277-residue chain is Formamidopyrimidine-DNA glycosylase (277 aa).

Catalysis depends on P2, which acts as the Schiff-base intermediate with DNA. Residue E3 is the Proton donor of the active site. The active-site Proton donor; for beta-elimination activity is the K59. Residues H96, R115, and R158 each contribute to the DNA site. The FPG-type zinc finger occupies 243–277; sequence WVYGRGGNPCRRCGGEILREKRAGRSTHFCPRCQK. The active-site Proton donor; for delta-elimination activity is the R267.

It belongs to the FPG family. In terms of assembly, monomer. The cofactor is Zn(2+).

It catalyses the reaction Hydrolysis of DNA containing ring-opened 7-methylguanine residues, releasing 2,6-diamino-4-hydroxy-5-(N-methyl)formamidopyrimidine.. The enzyme catalyses 2'-deoxyribonucleotide-(2'-deoxyribose 5'-phosphate)-2'-deoxyribonucleotide-DNA = a 3'-end 2'-deoxyribonucleotide-(2,3-dehydro-2,3-deoxyribose 5'-phosphate)-DNA + a 5'-end 5'-phospho-2'-deoxyribonucleoside-DNA + H(+). Its function is as follows. Involved in base excision repair of DNA damaged by oxidation or by mutagenic agents. Acts as a DNA glycosylase that recognizes and removes damaged bases. Has a preference for oxidized purines, such as 7,8-dihydro-8-oxoguanine (8-oxoG). Has AP (apurinic/apyrimidinic) lyase activity and introduces nicks in the DNA strand. Cleaves the DNA backbone by beta-delta elimination to generate a single-strand break at the site of the removed base with both 3'- and 5'-phosphates. The polypeptide is Formamidopyrimidine-DNA glycosylase (Heliobacterium modesticaldum (strain ATCC 51547 / Ice1)).